The sequence spans 431 residues: Trigger factor (431 aa).

The region spanning 158–243 is the PPIase FKBP-type domain; the sequence is GDLVAVETWS…VAEVSEPVVP (86 aa).

The protein belongs to the FKBP-type PPIase family. Tig subfamily.

The protein localises to the cytoplasm. The catalysed reaction is [protein]-peptidylproline (omega=180) = [protein]-peptidylproline (omega=0). In terms of biological role, involved in protein export. Acts as a chaperone by maintaining the newly synthesized protein in an open conformation. Functions as a peptidyl-prolyl cis-trans isomerase. This chain is Trigger factor, found in Stenotrophomonas maltophilia (strain R551-3).